Reading from the N-terminus, the 276-residue chain is Tryptophan synthase alpha chain (276 aa).

Catalysis depends on proton acceptor residues glutamate 49 and aspartate 60.

Belongs to the TrpA family. Tetramer of two alpha and two beta chains.

It carries out the reaction (1S,2R)-1-C-(indol-3-yl)glycerol 3-phosphate + L-serine = D-glyceraldehyde 3-phosphate + L-tryptophan + H2O. The protein operates within amino-acid biosynthesis; L-tryptophan biosynthesis; L-tryptophan from chorismate: step 5/5. Functionally, the alpha subunit is responsible for the aldol cleavage of indoleglycerol phosphate to indole and glyceraldehyde 3-phosphate. This chain is Tryptophan synthase alpha chain, found in Corynebacterium aurimucosum (strain ATCC 700975 / DSM 44827 / CIP 107346 / CN-1) (Corynebacterium nigricans).